The following is a 1167-amino-acid chain: C5a peptidase (1167 aa).

Residues 1 to 31 form the signal peptide; it reads MRKKQKLPFDKLAIALMSTSILLNAQSDIKA. The span at 34–52 shows a compositional bias: polar residues; the sequence is VTEDTPVTEQAVETPQPTA. The disordered stretch occupies residues 34–73; sequence VTEDTPVTEQAVETPQPTAVSEEVPSSKETKTPQTPDDAE. Residues 99–581 enclose the Peptidase S8 domain; that stretch reads KATIRDLNDP…AGAVDAKKAS (483 aa). Catalysis depends on charge relay system residues D130, H193, and S512. The disordered stretch occupies residues 1029–1133; sequence EGHSNKPEQD…RDQLPTTNDK (105 aa). A run of 4 repeats spans residues 1034–1050, 1051–1067, 1068–1084, and 1085–1101. Residues 1034 to 1101 form a 4 X 17 AA tandem repeats region; the sequence is KPEQDGSGQT…GQTPGKTPQK (68 aa). Basic and acidic residues-rich tracts occupy residues 1044–1071 and 1078–1090; these read PDKK…KPEQ and PDKK…EKDS. Polar residues-rich tracts occupy residues 1092–1106 and 1120–1130; these read GQTP…QPSR and KASTRDQLPTT. The short motif at 1127-1131 is the LPXTG sorting signal element; that stretch reads LPTTN. T1130 carries the post-translational modification Pentaglycyl murein peptidoglycan amidated threonine. The propeptide at 1131 to 1167 is removed by sortase; it reads NDKDTNRLHLLKLVMTTFFFGLVAHIFKTKRQKETKK.

This sequence belongs to the peptidase S8 family. In terms of processing, cleaved by SpeB protease; leading to its degradation. Degradation by SpeB is probably strictly regulated to preserve integrity of C5a peptidase.

The protein resides in the secreted. It localises to the cell wall. The enzyme catalyses The primary cleavage site is at 67-His-|-Lys-68 in human C5a with a minor secondary cleavage site at 58-Ala-|-Ser-59.. In terms of biological role, this virulence factor of S.pyogenes specifically cleaves the human serum chemotaxin C5a at '68-Lys-|-Asp-69' bond near its C-terminus, destroying its ability to serve as a chemoattractant. This chain is C5a peptidase (scpA), found in Streptococcus pyogenes.